Reading from the N-terminus, the 107-residue chain is CLAVATA3/ESR (CLE)-related protein 13 (107 aa).

A signal peptide spans 1–25 (MATTRVSHVLGFLLWISLLIFVSIG). Asparagine 29 is a glycosylation site (N-linked (GlcNAc...) asparagine). The segment at 79–107 (ALPAGGSEIDPRYGVEKRLVPSGPNPLHH) is disordered. Over residues 87–97 (IDPRYGVEKRL) the composition is skewed to basic and acidic residues. A hydroxyproline mark is found at proline 99 and proline 102. Proline 102 is a glycosylation site (O-linked (Ara...) hydroxyproline).

Belongs to the CLV3/ESR signal peptide family. Post-translationally, the O-glycosylation (arabinosylation) of the hydroxyproline Pro-102 enhances binding affinity of the CLE13p peptide for its receptor. Mostly expressed in seedlings, roots, flowers, stems and apex, and, to a lower extent, in leaves and siliques.

It localises to the secreted. The protein localises to the extracellular space. In terms of biological role, extracellular signal peptide that regulates cell fate. Represses root apical meristem maintenance. Regulates the transition of protophloem cells from proliferation to differentiation, thus impinging on postembryonic growth capacity of the root meristem; this signaling pathway requires CRN and CLV2. The chain is CLAVATA3/ESR (CLE)-related protein 13 from Arabidopsis thaliana (Mouse-ear cress).